Here is a 391-residue protein sequence, read N- to C-terminus: Ferrochelatase (391 aa).

Fe cation contacts are provided by H196 and E281.

The protein belongs to the ferrochelatase family.

The protein localises to the cytoplasm. The enzyme catalyses heme b + 2 H(+) = protoporphyrin IX + Fe(2+). It functions in the pathway porphyrin-containing compound metabolism; protoheme biosynthesis; protoheme from protoporphyrin-IX: step 1/1. Functionally, catalyzes the ferrous insertion into protoporphyrin IX. This is Ferrochelatase from Prochlorococcus marinus (strain AS9601).